The chain runs to 271 residues: MTYLQESSRPAVTVPKLQAMREAGEKIAMLTSYDASFAALLDRANVDVQLIGDSLGNVLQGQATTLPVTLDDIAYHTACVARAQPRGLVVADLPFGTYGTPADAFASAVKLMRAGAQMVKLEGGEWLAETVRFLVERAVPVCAHVGLTPQSVHAFGGFKVQGKTEAGAAQLLRDARAVEEAGAQLIVLEAVPTLVAAEVTRELSIPTIGIGAGAECSGQVLVLHDMLGVFPGKRPRFVKDFMQGQPSIFAAVEAYVRAVKDGSFPGPEHSF.

Positions 53 and 92 each coordinate Mg(2+). 3-methyl-2-oxobutanoate contacts are provided by residues 53 to 54, Asp-92, and Lys-120; that span reads DS. A Mg(2+)-binding site is contributed by Glu-122. Glu-189 (proton acceptor) is an active-site residue.

It belongs to the PanB family. As to quaternary structure, homodecamer; pentamer of dimers. Requires Mg(2+) as cofactor.

The protein resides in the cytoplasm. The catalysed reaction is 3-methyl-2-oxobutanoate + (6R)-5,10-methylene-5,6,7,8-tetrahydrofolate + H2O = 2-dehydropantoate + (6S)-5,6,7,8-tetrahydrofolate. Its pathway is cofactor biosynthesis; (R)-pantothenate biosynthesis; (R)-pantoate from 3-methyl-2-oxobutanoate: step 1/2. In terms of biological role, catalyzes the reversible reaction in which hydroxymethyl group from 5,10-methylenetetrahydrofolate is transferred onto alpha-ketoisovalerate to form ketopantoate. The protein is 3-methyl-2-oxobutanoate hydroxymethyltransferase of Burkholderia mallei (strain NCTC 10247).